A 309-amino-acid chain; its full sequence is Isethionate sulfite-lyase activating enzyme (309 aa).

Positions 22–309 (HDGPGIRTVV…VVAAEHATDG (288 aa)) constitute a Radical SAM core domain. [4Fe-4S] cluster is bound by residues Cys-36, Cys-40, Cys-43, Cys-62, Cys-68, Cys-71, Cys-75, Cys-95, Cys-98, Cys-102, and Cys-106. 42 to 44 (WCS) lines the S-adenosyl-L-methionine pocket. 2 consecutive 4Fe-4S ferredoxin-type domains span residues 53 to 85 (IELA…RADD) and 86 to 117 (DTIS…YGTT). S-adenosyl-L-methionine contacts are provided by residues Gly-146, 195–197 (DIK), and His-268.

It belongs to the organic radical-activating enzymes family. As to quaternary structure, monomer. It depends on [4Fe-4S] cluster as a cofactor.

The catalysed reaction is glycyl-[protein] + reduced [flavodoxin] + S-adenosyl-L-methionine = glycin-2-yl radical-[protein] + semiquinone [flavodoxin] + 5'-deoxyadenosine + L-methionine + H(+). Its pathway is organosulfur degradation; alkanesulfonate degradation. Its function is as follows. Involved in an anaerobic respiration pathway that converts the sulfonate isethionate (2-hydroxyethanesulfonate) to ammonia, acetate and sulfide. Catalyzes activation of the isethionate sulfite-lyase IslA under anaerobic conditions by generation of an organic free radical on a glycine residue, via a homolytic cleavage of S-adenosyl-L-methionine (SAM). This Oleidesulfovibrio alaskensis (strain ATCC BAA-1058 / DSM 17464 / G20) (Desulfovibrio alaskensis) protein is Isethionate sulfite-lyase activating enzyme.